Reading from the N-terminus, the 206-residue chain is Isochorismatase family protein 1A (206 aa).

The protein belongs to the isochorismatase family.

In Dictyostelium discoideum (Social amoeba), this protein is Isochorismatase family protein 1A.